Here is a 196-residue protein sequence, read N- to C-terminus: Regulator of G-protein signaling 8 (196 aa).

Ser26 carries the post-translational modification Phosphoserine. Residues 72–188 (SFDVLLSHKY…LRSKMYLDLL (117 aa)) enclose the RGS domain.

As to quaternary structure, interacts with GNAO1 and GNAI3.

The protein localises to the cell membrane. The protein resides in the membrane. Its subcellular location is the perikaryon. It is found in the cell projection. It localises to the dendrite. The protein localises to the nucleus. Functionally, regulates G protein-coupled receptor signaling cascades, including signaling via muscarinic acetylcholine receptor CHRM2 and dopamine receptor DRD2. Inhibits signal transduction by increasing the GTPase activity of G protein alpha subunits, thereby driving them into their inactive GDP-bound form. Modulates the activity of potassium channels that are activated in response to DRD2 and CHRM2 signaling. In Macaca fascicularis (Crab-eating macaque), this protein is Regulator of G-protein signaling 8 (RGS8).